A 689-amino-acid polypeptide reads, in one-letter code: Protein SDA1 homolog (689 aa).

Residues 254–319 (KKNTKNKKKL…RFEVKLMHMD (66 aa)) are a coiled coil. 2 disordered regions span residues 485-512 (EQEK…DGEW) and 606-689 (KPKS…RLMK). Residues 668-681 (SFRDKQIALRDSLL) show a composition bias toward basic and acidic residues.

The protein belongs to the SDA1 family.

Its subcellular location is the nucleus. The protein resides in the nucleolus. Functionally, required for 60S pre-ribosomal subunits export to the cytoplasm. The protein is Protein SDA1 homolog (sdad1) of Xenopus tropicalis (Western clawed frog).